We begin with the raw amino-acid sequence, 2194 residues long: Nucleosome-remodeling factor subunit NURF301-like (2194 aa).

Positions 1 to 12 are enriched in basic residues; sequence MAPPRGRSKRKH. The tract at residues 1–137 is disordered; it reads MAPPRGRSKR…EEEESSDDEF (137 aa). Residues 60–79 show a composition bias toward basic and acidic residues; the sequence is AQRETPSDAEEVEVKIEEIS. The span at 80 to 93 shows a compositional bias: polar residues; that stretch reads VRSTPASTPAPKST. The span at 94–112 shows a compositional bias: basic residues; the sequence is SKARGRPKKNPTPPRRKSL. Acidic residues predominate over residues 118 to 137; it reads DIIYMDEDSEEEEESSDDEF. 2 consecutive DDT domains span residues 196–256 and 341–396; these read TASI…SDDE and VGKF…SAVR. The PHD-type 1 zinc finger occupies 347-392; it reads DENCRVCGKSSGRVVGCTQCEAAFHVECSHLKPFPEVLVCNICKKN. Disordered regions lie at residues 1091–1122, 1158–1255, 1413–1433, 1657–1701, and 1834–1888; these read ESWL…SLDN, AKRK…PQPN, TSNF…PVYS, MRQE…SNDS, and ESIA…HTPG. Residues 1151–1187 are a coiled coil; the sequence is RAEAEKTAKRKLEATRKAQKAKEDEERRRIQQQQQRS. Basic and acidic residues predominate over residues 1158 to 1179; that stretch reads AKRKLEATRKAQKAKEDEERRR. Polar residues predominate over residues 1665 to 1684; that stretch reads TSGYDSSGNPIRSITSSGDT. Residues 1852–1861 show a composition bias toward basic and acidic residues; that stretch reads KSEDDRDKPE. 2 consecutive DDT domains span residues 1883-1953 and 1948-2014; these read AFHT…EQER and IEEQ…AEGY. 2 consecutive PHD-type zinc fingers follow at residues 1899–1950 and 1959–2010; these read IEHC…CIEE and ALYC…CTRE. The region spanning 2030–2134 is the Bromo domain; that stretch reads QLTRADYTHV…EVFDKKLIDV (105 aa).

The protein belongs to the BPTF family. As to quaternary structure, part of a nucleosome remodeling factor-like (NURF-like) complex containing nurf-1 and isw-1.

It is found in the nucleus. In terms of biological role, histone-binding component of a NURF-like (nucleosome remodeling factor-like) complex, which would catalyze ATP-dependent nucleosome sliding and facilitate transcription of chromatin. Involved in vulval cell fates. This chain is Nucleosome-remodeling factor subunit NURF301-like (nurf-1), found in Caenorhabditis elegans.